Here is a 176-residue protein sequence, read N- to C-terminus: Large ribosomal subunit protein uL10 (176 aa).

Belongs to the universal ribosomal protein uL10 family. In terms of assembly, part of the ribosomal stalk of the 50S ribosomal subunit. The N-terminus interacts with L11 and the large rRNA to form the base of the stalk. The C-terminus forms an elongated spine to which L12 dimers bind in a sequential fashion forming a multimeric L10(L12)X complex.

Forms part of the ribosomal stalk, playing a central role in the interaction of the ribosome with GTP-bound translation factors. The chain is Large ribosomal subunit protein uL10 from Marinobacter nauticus (strain ATCC 700491 / DSM 11845 / VT8) (Marinobacter aquaeolei).